The chain runs to 160 residues: Large ribosomal subunit protein uL16 (160 aa).

Positions 138–160 are disordered; it reads KNLEAPSQEKTKNSKKSQEEVKQ.

Belongs to the universal ribosomal protein uL16 family. Part of the 50S ribosomal subunit.

Functionally, binds 23S rRNA and is also seen to make contacts with the A and possibly P site tRNAs. The polypeptide is Large ribosomal subunit protein uL16 (Prochlorococcus marinus (strain MIT 9215)).